We begin with the raw amino-acid sequence, 100 residues long: Large ribosomal subunit protein uL23c (100 aa).

The protein belongs to the universal ribosomal protein uL23 family. In terms of assembly, part of the 50S ribosomal subunit.

It localises to the plastid. It is found in the chloroplast. Its function is as follows. Binds to 23S rRNA. The sequence is that of Large ribosomal subunit protein uL23c (rpl23) from Euglena gracilis.